Consider the following 264-residue polypeptide: MKQYLDLLRRILDEGVRKEDRTGTGTISVFGHQMCFDLEEGFPLLTTKRLHLKSIIYELLWFLRGDTNVHYLQEHGVRIWNEWADENGDLGPIYGYQWRSWPDYRGGHIDQMQEVLRQLREEPDSRRIIVCSWNVGQLADMHLPPCHCFMQFYVADGRLSLQLYQRSADSFLGIPFNIASYALLLQMIAHVTGLKPGRFVHTLGDAHIYLNHLEQVQLQLSREPRALPRMVLNPEVSDLFDFRYEDFRLEGYDPHPHIAGVVAV.

R21 is a dUMP binding site. H51 provides a ligand contact to (6R)-5,10-methylene-5,6,7,8-tetrahydrofolate. 126–127 (RR) contacts dUMP. C146 functions as the Nucleophile in the catalytic mechanism. DUMP is bound by residues 166 to 169 (RSAD), N177, and 207 to 209 (HIY). D169 lines the (6R)-5,10-methylene-5,6,7,8-tetrahydrofolate pocket. A263 is a (6R)-5,10-methylene-5,6,7,8-tetrahydrofolate binding site.

This sequence belongs to the thymidylate synthase family. Bacterial-type ThyA subfamily. As to quaternary structure, homodimer.

It localises to the cytoplasm. It catalyses the reaction dUMP + (6R)-5,10-methylene-5,6,7,8-tetrahydrofolate = 7,8-dihydrofolate + dTMP. The protein operates within pyrimidine metabolism; dTTP biosynthesis. Functionally, catalyzes the reductive methylation of 2'-deoxyuridine-5'-monophosphate (dUMP) to 2'-deoxythymidine-5'-monophosphate (dTMP) while utilizing 5,10-methylenetetrahydrofolate (mTHF) as the methyl donor and reductant in the reaction, yielding dihydrofolate (DHF) as a by-product. This enzymatic reaction provides an intracellular de novo source of dTMP, an essential precursor for DNA biosynthesis. The chain is Thymidylate synthase from Porphyromonas gingivalis (strain ATCC BAA-308 / W83).